Consider the following 405-residue polypeptide: Calsequestrin-1 (405 aa).

Positions 1–34 (MRATDRMGARAVSELRLALLFVLVLGTPRLGVQG) are cleaved as a signal peptide. Phosphotyrosine is present on Y43. Residue S81 is modified to Phosphoserine. Position 124 is a phosphothreonine (T124). The residue at position 216 (S216) is a Phosphoserine. A glycan (N-linked (GlcNAc...) asparagine) is linked at N350. Residues 382–405 (EGEINTEDDDDDDDDDDDDDDDDD) form a disordered region.

It belongs to the calsequestrin family. Monomer; increases in response to a depletion of intracellular calcium. Homodimer. Homotetramer and homopolymer. Can form linear homooligomers. Ca(2+) ions promote oligomerization. Interacts (via C-terminal end and preferentially with the monomeric form) with STIM1; this interaction increases in response to a depletion of intracellular calcium, decreases both STIM1 aggregation and clustering, interaction of STIM1 with ORAI1 and store-operated Ca(2+) entry (SOCE) activity. Interacts with ASPH and TRDN. In terms of processing, N-glycosylated. Detected in skeletal muscle (at protein level). Detected in skeletal muscle.

The protein localises to the endoplasmic reticulum. It localises to the sarcoplasmic reticulum. Its subcellular location is the sarcoplasmic reticulum lumen. The protein resides in the sarcoplasmic reticulum membrane. It is found in the mitochondrion matrix. In terms of biological role, calsequestrin is a high-capacity, moderate affinity, calcium-binding protein and thus acts as an internal calcium store in muscle. Calcium ions are bound by clusters of acidic residues at the protein surface, often at the interface between subunits. Can bind around 80 Ca(2+) ions. Regulates the release of lumenal Ca(2+) via the calcium release channel RYR1; this plays an important role in triggering muscle contraction. Negatively regulates store-operated Ca(2+) entry (SOCE) activity. The chain is Calsequestrin-1 (Casq1) from Mus musculus (Mouse).